The following is a 266-amino-acid chain: Nus factor SuhB (266 aa).

A substrate-binding site is contributed by 86 to 89; sequence LDGI.

It belongs to the inositol monophosphatase superfamily. As to quaternary structure, homodimer. The rRNA transcription and antitermination complex (rrnTAC) consists of RNA polymerase (RNAP), NusA, NusB, NusE (rpsJ), NusG, SubB, ribosomal protein S4, DNA and precursor rRNA; S4 is more flexible than other subunits. It depends on Mg(2+) as a cofactor.

The protein localises to the cytoplasm. The enzyme catalyses a myo-inositol phosphate + H2O = myo-inositol + phosphate. Its function is as follows. Part of the processive rRNA transcription and antitermination complex (rrnTAC). The complex forms an RNA-chaperone ring around the RNA exit tunnel of RNA polymerase (RNAP). It supports rapid transcription and antitermination of rRNA operons, cotranscriptional rRNA folding, and annealing of distal rRNA regions to allow correct ribosome biogenesis. This subunit may play a central role in organizing the structure. This is Nus factor SuhB (suhB) from Buchnera aphidicola subsp. Baizongia pistaciae (strain Bp).